A 1085-amino-acid chain; its full sequence is Kinesin-like protein cut7 (1085 aa).

Positions M1 to E70 are disordered. Residues P24–N37 show a composition bias toward polar residues. The 350-residue stretch at N72–I421 folds into the Kinesin motor domain. G159–T166 is an ATP binding site. Coiled coils occupy residues L436–K604, I715–L740, and L897–K955. 2 repeats span residues D987–E998 and D999–D1010. T1011 is modified (phosphothreonine; by CDC2). Residues Y1049 to R1085 form a disordered region. Residues S1065–S1078 show a composition bias toward low complexity.

This sequence belongs to the TRAFAC class myosin-kinesin ATPase superfamily. Kinesin family. BimC subfamily.

The protein localises to the cytoplasm. The protein resides in the cytoskeleton. Its subcellular location is the microtubule organizing center. It localises to the spindle pole body. In terms of biological role, could be a spindle pole body motor. On transition from G2 to M phase of the cell cycle, the spindle pole body duplicates; the daughter pole bodies seed microtubules which interdigitate to form a short spindle that elongates to span the nucleus at metaphase. Mutations at cut7 block spindle formation. The chain is Kinesin-like protein cut7 (cut7) from Schizosaccharomyces pombe (strain 972 / ATCC 24843) (Fission yeast).